The following is a 271-amino-acid chain: Urease accessory protein UreD (271 aa).

It belongs to the UreD family. UreD, UreF and UreG form a complex that acts as a GTP-hydrolysis-dependent molecular chaperone, activating the urease apoprotein by helping to assemble the nickel containing metallocenter of UreC. The UreE protein probably delivers the nickel.

The protein localises to the cytoplasm. Its function is as follows. Required for maturation of urease via the functional incorporation of the urease nickel metallocenter. In Halalkalibacterium halodurans (strain ATCC BAA-125 / DSM 18197 / FERM 7344 / JCM 9153 / C-125) (Bacillus halodurans), this protein is Urease accessory protein UreD.